The following is a 475-amino-acid chain: Polyphosphate:AMP phosphotransferase (475 aa).

PPK2 stretches follow at residues Leu-18–Leu-222 and Ala-256–Arg-472.

The protein belongs to the polyphosphate kinase 2 (PPK2) family. Class II subfamily. As to quaternary structure, homodimer and homotetramer. Mg(2+) is required as a cofactor.

The enzyme catalyses [phosphate](n) + ADP = [phosphate](n+1) + AMP. In terms of biological role, uses inorganic polyphosphate (polyP) as a donor to convert AMP to ADP. Can also use GMP, UMP, CMP, TMP or deoxyribonucleoside monophosphates, with lower efficiency. Cannot use low-molecular weight polyP as donors. Can also catalyze the synthesis of polyP from ADP or GDP, with lower efficiency. In Acinetobacter johnsonii, this protein is Polyphosphate:AMP phosphotransferase.